The sequence spans 230 residues: Ion-translocating oxidoreductase complex subunit E (230 aa).

The next 6 helical transmembrane spans lie at 18–38 (ALVQLLGLCPLLAVSSTITNA), 39–59 (LGLGIATLLVLVGSNVTVSLI), 69–89 (IPVFVMIIASLVTCVQLLMNA), 93–113 (GLYLSLGIFIPLIVTNCIIIG), 124–144 (VLPAALDGLWMGLGMTSVLVV), and 182–202 (SFLLALLPPGAFIGVGLLIAL).

Belongs to the NqrDE/RnfAE family. The complex is composed of six subunits: RnfA, RnfB, RnfC, RnfD, RnfE and RnfG.

It is found in the cell inner membrane. Part of a membrane-bound complex that couples electron transfer with translocation of ions across the membrane. The polypeptide is Ion-translocating oxidoreductase complex subunit E (Vibrio parahaemolyticus serotype O3:K6 (strain RIMD 2210633)).